We begin with the raw amino-acid sequence, 629 residues long: Embryonic polyadenylate-binding protein (629 aa).

RRM domains follow at residues alanine 11 to arginine 89, glycine 99 to serine 175, threonine 191 to lysine 268, and valine 294 to arginine 370. Residues glutamine 539–alanine 616 form the PABC domain.

The protein belongs to the polyadenylate-binding protein type-1 family. Interacts with dazl in an RNA-independent manner. The C-terminus can self-associate and also interact with the C-terminus of pabpc1, independently of RNA. RRM 1 and RRM 2 interact with both eif4g1 and paip1, and the C-terminus also interacts with paip1. Prior to oocyte maturation, found in a complex with dazl and pum2 proteins and spdy1 mRNA; pum2 dissociates from the complex during maturation. Interacts with the translation termination factor sup35/erf3.

It localises to the cytoplasm. In terms of biological role, binds and protects the poly(A) tail of mRNA with or without an AU-rich element (ARE) and prevents mRNA deadenylation. Stimulates the translation of mRNAs to which it is bound during early development. This chain is Embryonic polyadenylate-binding protein, found in Xenopus tropicalis (Western clawed frog).